Reading from the N-terminus, the 60-residue chain is Large ribosomal subunit protein uL30 (60 aa).

Belongs to the universal ribosomal protein uL30 family. Part of the 50S ribosomal subunit.

This Paracidovorax citrulli (strain AAC00-1) (Acidovorax citrulli) protein is Large ribosomal subunit protein uL30.